The following is a 129-amino-acid chain: Small ribosomal subunit protein uS13 (129 aa).

A compositionally biased stretch (basic residues) spans 95–114; sequence NLPVRGQRTKTNARTRRGPR. Residues 95-129 are disordered; it reads NLPVRGQRTKTNARTRRGPRKTVAGRGQKRGATKK.

This sequence belongs to the universal ribosomal protein uS13 family. In terms of assembly, part of the 30S ribosomal subunit. Forms a loose heterodimer with protein S19. Forms two bridges to the 50S subunit in the 70S ribosome.

Located at the top of the head of the 30S subunit, it contacts several helices of the 16S rRNA. In the 70S ribosome it contacts the 23S rRNA (bridge B1a) and protein L5 of the 50S subunit (bridge B1b), connecting the 2 subunits; these bridges are implicated in subunit movement. Contacts the tRNAs in the A and P-sites. This Dehalococcoides mccartyi (strain ATCC BAA-2100 / JCM 16839 / KCTC 5957 / BAV1) protein is Small ribosomal subunit protein uS13.